The following is a 475-amino-acid chain: Aspartyl/glutamyl-tRNA(Asn/Gln) amidotransferase subunit B (475 aa).

Belongs to the GatB/GatE family. GatB subfamily. As to quaternary structure, heterotrimer of A, B and C subunits.

The catalysed reaction is L-glutamyl-tRNA(Gln) + L-glutamine + ATP + H2O = L-glutaminyl-tRNA(Gln) + L-glutamate + ADP + phosphate + H(+). It catalyses the reaction L-aspartyl-tRNA(Asn) + L-glutamine + ATP + H2O = L-asparaginyl-tRNA(Asn) + L-glutamate + ADP + phosphate + 2 H(+). Its function is as follows. Allows the formation of correctly charged Asn-tRNA(Asn) or Gln-tRNA(Gln) through the transamidation of misacylated Asp-tRNA(Asn) or Glu-tRNA(Gln) in organisms which lack either or both of asparaginyl-tRNA or glutaminyl-tRNA synthetases. The reaction takes place in the presence of glutamine and ATP through an activated phospho-Asp-tRNA(Asn) or phospho-Glu-tRNA(Gln). The protein is Aspartyl/glutamyl-tRNA(Asn/Gln) amidotransferase subunit B of Thermoanaerobacter sp. (strain X514).